The chain runs to 2316 residues: Receptor-type tyrosine-protein phosphatase zeta (2316 aa).

The first 24 residues, 1-24 (MRILQSFLACVQLLCVCRLDWAYG), serve as a signal peptide directing secretion. Residues 25-1637 (YYRQQRKLVE…LAEGLESEKK (1613 aa)) are Extracellular-facing. In terms of domain architecture, Alpha-carbonic anhydrase spans 36-300 (IGWSYTGALN…KFSRQVFSSY (265 aa)). Intrachain disulfides connect Cys56/Cys240 and Cys133/Cys264. N-linked (GlcNAc...) asparagine glycans are attached at residues Asn105, Asn134, Asn223, Asn232, Asn324, Asn381, and Asn497. Residues 314–413 (EPENVQADPE…LIVDMPTEDA (100 aa)) form the Fibronectin type-III domain. Disordered stretches follow at residues 433-499 (YGKG…LNTS) and 518-537 (LPSQIGTNLPPHSVEGTSAS). A glycan (N-linked (GlcNAc...) asparagine) is linked at Asn552. 2 positions are modified to phosphoserine: Ser572 and Ser576. 2 disordered regions span residues 586–624 (KLDSGADDSSGSSPASSTVPFSTDNLSHGYTSSSDTPEA) and 636–720 (RNAL…EMPH). Residues 592 to 602 (DDSSGSSPASS) are compositionally biased toward low complexity. Ser595 carries O-linked (Xyl...) (chondroitin sulfate) serine glycosylation. Polar residues predominate over residues 603-621 (TVPFSTDNLSHGYTSSSDT). Asn610 carries N-linked (GlcNAc...) asparagine glycosylation. Ser645 bears the Phosphoserine; alternate mark. Residue Ser645 is glycosylated (O-linked (Xyl...) (chondroitin sulfate) serine; alternate). Ser647 is modified (phosphoserine). Over residues 666-675 (TDLTTQSETG) the composition is skewed to polar residues. Asn685 carries N-linked (GlcNAc...) asparagine glycosylation. Polar residues predominate over residues 699 to 711 (ETFSPDATASRGP). Asn786 carries N-linked (GlcNAc...) asparagine glycosylation. Ser1005 carries O-linked (Xyl...) (chondroitin sulfate) serine glycosylation. 2 N-linked (GlcNAc...) asparagine glycosylation sites follow: Asn1025 and Asn1058. Disordered regions lie at residues 1141–1172 (QASGDTWLKPGLSTNSEPALSDTASSEVSHPS), 1204–1228 (KTALPSGPRDPVLTETPMVEQSSSS), 1401–1521 (LLPS…DGRE), and 1545–1622 (TSDE…NSSH). Positions 1152–1172 (LSTNSEPALSDTASSEVSHPS) are enriched in polar residues. Positions 1401–1413 (LLPSKATSKPTHS) are enriched in polar residues. A compositionally biased stretch (acidic residues) spans 1425–1439 (EDGDDYDDDDYDDID). Asn1463 is a glycosylation site (N-linked (GlcNAc...) asparagine). Over residues 1464–1478 (DSDTQESSLVDQSDP) the composition is skewed to polar residues. O-linked (Xyl...) (chondroitin sulfate) serine glycosylation is found at Ser1550 and Ser1552. 2 stretches are compositionally biased toward polar residues: residues 1555 to 1569 (GTSDSLNDNETSTDF) and 1595 to 1609 (PRSSTPSVTSGHSGV). An N-linked (GlcNAc...) asparagine glycan is attached at Asn1563. Low complexity predominate over residues 1610 to 1621 (SNSSEAEASNSS). 2 N-linked (GlcNAc...) asparagine glycosylation sites follow: Asn1611 and Asn1619. The chain crosses the membrane as a helical span at residues 1638–1663 (AVIPLVIVSALTFICLVVLVGILIYW). At 1664–2316 (RKCFQTAHFY…NIAESLESLV (653 aa)) the chain is on the cytoplasmic side. Residues Thr1685 and Thr1688 each carry the phosphothreonine modification. Tyrosine-protein phosphatase domains follow at residues 1718 to 1993 (FTEE…LVEA) and 2024 to 2283 (LEKQ…VLSL). Residues Asp1902, 1934–1940 (CSAGVGR), and Gln1978 contribute to the substrate site. Cys1934 functions as the Phosphocysteine intermediate in the catalytic mechanism. Phosphoserine is present on Ser2056.

It belongs to the protein-tyrosine phosphatase family. Receptor class 5 subfamily. Interacts with tenascin. Interacts with N-CAM and NG-CAM. The carbonic-anhydrase like domain interacts with CNTN1 (contactin). Interacts with PTN. Interaction with PTN promotes formation of homooligomers; oligomerization impairs phosphatase activity. Interacts (via chondroitin sulfate chains) with MDK (via C-terminal); this interaction is inhibited by PTN; this interaction promotes neuronal migration. Nervous tissue specific.

It localises to the cell membrane. Its subcellular location is the secreted. It carries out the reaction O-phospho-L-tyrosyl-[protein] + H2O = L-tyrosyl-[protein] + phosphate. In terms of biological role, protein tyrosine phosphatase that negatively regulates oligodendrocyte precursor proliferation in the embryonic spinal cord. Required for normal differentiation of the precursor cells into mature, fully myelinating oligodendrocytes. May play a role in protecting oligondendrocytes against apoptosis. May play a role in the establishment of contextual memory, probably via the dephosphorylation of proteins that are part of important signaling cascades. Its function is as follows. Isoform 3 (phosphacan), previously designated 3F8 chondroitin sulfate proteoglycan or 3H1 keratan sulfate proteoglycan depending on the glycosylation status, is a soluble nervous tissue-specific proteoglycan. It is synthesized by glia and binds to neurons and to the neural cell adhesion molecules tenascin, N-CAM or NG-CAM but not to laminin and fibronectin. Phosphacan acts as a potent inhibitor of cell adhesion and neurite outgrowth. The protein is Receptor-type tyrosine-protein phosphatase zeta (Ptprz1) of Rattus norvegicus (Rat).